The sequence spans 373 residues: tRNA-specific 2-thiouridylase MnmA (373 aa).

ATP contacts are provided by residues G12–S19 and M38. The tract at residues N98–D100 is interaction with target base in tRNA. C103 serves as the catalytic Nucleophile. A disulfide bridge connects residues C103 and C200. G127 is a binding site for ATP. The segment at K150–Q152 is interaction with tRNA. The active-site Cysteine persulfide intermediate is C200. Residues R312 to Y313 form an interaction with tRNA region.

Belongs to the MnmA/TRMU family.

The protein resides in the cytoplasm. It carries out the reaction S-sulfanyl-L-cysteinyl-[protein] + uridine(34) in tRNA + AH2 + ATP = 2-thiouridine(34) in tRNA + L-cysteinyl-[protein] + A + AMP + diphosphate + H(+). Functionally, catalyzes the 2-thiolation of uridine at the wobble position (U34) of tRNA, leading to the formation of s(2)U34. The sequence is that of tRNA-specific 2-thiouridylase MnmA from Streptococcus pyogenes serotype M2 (strain MGAS10270).